A 351-amino-acid polypeptide reads, in one-letter code: MTVTIKLGQLAEFLGATLSGDPEKQITGLATLQEAGPAQLSFLANPQYRKYLAGTQAAALLLKAADAEGYAGNALVVPDPYLAYARISHLFDPKPKATAGIHPTAVIAEDAVVDPSASVGPFVVIEAGARIGADVTLGAHCVVGARSEIGEGGWLAPRVTLYHDVRIGKRVVIQSGAVLGGEGFGFANEKGVWQKIAQIGGVTIGDDVEIGVNTAIDRGALADTVIGNGVKLDNQIQIAHNVQVGDHTAMAACVGISGSTKIGKHCMLAGGVGLVGHIDICDNVFLTGMTMVTHSITEPGAYSSGTAMQPAAEWRKSAARIRQLDDIARRLKQLEKRSGEVTPDGNASSEG.

The Proton acceptor role is filled by histidine 240.

The protein belongs to the transferase hexapeptide repeat family. LpxD subfamily. Homotrimer.

The catalysed reaction is a UDP-3-O-[(3R)-3-hydroxyacyl]-alpha-D-glucosamine + a (3R)-hydroxyacyl-[ACP] = a UDP-2-N,3-O-bis[(3R)-3-hydroxyacyl]-alpha-D-glucosamine + holo-[ACP] + H(+). It functions in the pathway bacterial outer membrane biogenesis; LPS lipid A biosynthesis. Catalyzes the N-acylation of UDP-3-O-acylglucosamine using 3-hydroxyacyl-ACP as the acyl donor. Is involved in the biosynthesis of lipid A, a phosphorylated glycolipid that anchors the lipopolysaccharide to the outer membrane of the cell. This is UDP-3-O-acylglucosamine N-acyltransferase from Pseudomonas fluorescens (strain Pf0-1).